A 37-amino-acid polypeptide reads, in one-letter code: Photosystem II reaction center protein M (37 aa).

A helical membrane pass occupies residues 7-27 (GFIAVLMFLAIPTAFLLIPYV).

Belongs to the PsbM family. In terms of assembly, PSII is composed of 1 copy each of membrane proteins PsbA, PsbB, PsbC, PsbD, PsbE, PsbF, PsbH, PsbI, PsbJ, PsbK, PsbL, PsbM, PsbT, PsbX, PsbY, PsbZ, Psb30/Ycf12, at least 3 peripheral proteins of the oxygen-evolving complex and a large number of cofactors. It forms dimeric complexes.

It is found in the plastid. The protein localises to the chloroplast thylakoid membrane. Functionally, one of the components of the core complex of photosystem II (PSII). PSII is a light-driven water:plastoquinone oxidoreductase that uses light energy to abstract electrons from H(2)O, generating O(2) and a proton gradient subsequently used for ATP formation. It consists of a core antenna complex that captures photons, and an electron transfer chain that converts photonic excitation into a charge separation. This subunit is found at the monomer-monomer interface. The sequence is that of Photosystem II reaction center protein M from Pinus koraiensis (Korean pine).